The chain runs to 286 residues: Probable xyloglucan endotransglucosylase/hydrolase protein 23 (286 aa).

An N-terminal signal peptide occupies residues 1 to 24; the sequence is MAMISYSTIVVALLASFMICSVSA. Residues 25–214 enclose the GH16 domain; the sequence is NFQRDVEITW…WSKAPFTASY (190 aa). Catalysis depends on E100, which acts as the Nucleophile. Catalysis depends on E104, which acts as the Proton donor. Xyloglucan is bound at residue E104. N108 carries N-linked (GlcNAc...) asparagine glycosylation. Residues 117–119, 127–129, 193–194, and G198 contribute to the xyloglucan site; these read HTN, DRE, and EW. C222 and C231 are oxidised to a cystine. Residue N233 is glycosylated (N-linked (GlcNAc...) asparagine). C269 and C283 form a disulfide bridge. R274 is a xyloglucan binding site.

This sequence belongs to the glycosyl hydrolase 16 family. XTH group 2 subfamily. Contains at least one intrachain disulfide bond essential for its enzymatic activity.

The protein resides in the secreted. It localises to the cell wall. Its subcellular location is the extracellular space. It is found in the apoplast. The enzyme catalyses breaks a beta-(1-&gt;4) bond in the backbone of a xyloglucan and transfers the xyloglucanyl segment on to O-4 of the non-reducing terminal glucose residue of an acceptor, which can be a xyloglucan or an oligosaccharide of xyloglucan.. Catalyzes xyloglucan endohydrolysis (XEH) and/or endotransglycosylation (XET). Cleaves and religates xyloglucan polymers, an essential constituent of the primary cell wall, and thereby participates in cell wall construction of growing tissues. The sequence is that of Probable xyloglucan endotransglucosylase/hydrolase protein 23 (XTH23) from Arabidopsis thaliana (Mouse-ear cress).